Reading from the N-terminus, the 227-residue chain is 2,3-bisphosphoglycerate-dependent phosphoglycerate mutase (227 aa).

Residues 7-14, 20-21, Arg-59, 86-89, Lys-97, 113-114, and 182-183 contribute to the substrate site; these read RHGFSEWN, TG, ERHY, RR, and GN. Catalysis depends on His-8, which acts as the Tele-phosphohistidine intermediate. The active-site Proton donor/acceptor is the Glu-86.

The protein belongs to the phosphoglycerate mutase family. BPG-dependent PGAM subfamily. Homodimer.

It catalyses the reaction (2R)-2-phosphoglycerate = (2R)-3-phosphoglycerate. The protein operates within carbohydrate degradation; glycolysis; pyruvate from D-glyceraldehyde 3-phosphate: step 3/5. Catalyzes the interconversion of 2-phosphoglycerate and 3-phosphoglycerate. This is 2,3-bisphosphoglycerate-dependent phosphoglycerate mutase from Haemophilus ducreyi (strain 35000HP / ATCC 700724).